The primary structure comprises 345 residues: MTVNLRDLSRTIAEFAFLTALVCNSLLIYLTARRTKNITGAYKYMIILFALLGLIFSCTEMLARPFVHNFNASFVYFSLSNDLSEFKSLVQMLLVLYSGLYSSLISFVAVQFIYRYMVLVNANLLESWFTGWKLVFWVFYVIFFGFAWSASVYFCLFPDTYSYNYIRTEFKDVYNIGVDRVAIFILVAYEKHPSSEEYKLRPASVIMIAGTISILVIQYSIMLFCGASMHRQMNEKLKNFSPDNQRLQKQFFKTLLLQISVPTVLFHMPIFPVLLGPFFNFEISAESGIIYSLFSLYPPIDGLIIMTVVTDYRIALTELFLGSHSGAQVEVIPVEVVSILNFSLL.

The Extracellular segment spans residues 1–11 (MTVNLRDLSRT). The chain crosses the membrane as a helical span at residues 12 to 32 (IAEFAFLTALVCNSLLIYLTA). The Cytoplasmic portion of the chain corresponds to 33–37 (RRTKN). Residues 38-58 (ITGAYKYMIILFALLGLIFSC) traverse the membrane as a helical segment. At 59–92 (TEMLARPFVHNFNASFVYFSLSNDLSEFKSLVQM) the chain is on the extracellular side. A glycan (N-linked (GlcNAc...) asparagine) is linked at Asn-71. Residues 93-113 (LLVLYSGLYSSLISFVAVQFI) form a helical membrane-spanning segment. Over 114–133 (YRYMVLVNANLLESWFTGWK) the chain is Cytoplasmic. The helical transmembrane segment at 134-154 (LVFWVFYVIFFGFAWSASVYF) threads the bilayer. The Extracellular segment spans residues 155 to 204 (CLFPDTYSYNYIRTEFKDVYNIGVDRVAIFILVAYEKHPSSEEYKLRPAS). The helical transmembrane segment at 205 to 225 (VIMIAGTISILVIQYSIMLFC) threads the bilayer. The Cytoplasmic portion of the chain corresponds to 226–258 (GASMHRQMNEKLKNFSPDNQRLQKQFFKTLLLQ). The chain crosses the membrane as a helical span at residues 259-279 (ISVPTVLFHMPIFPVLLGPFF). The Extracellular portion of the chain corresponds to 280-288 (NFEISAESG). The chain crosses the membrane as a helical span at residues 289 to 309 (IIYSLFSLYPPIDGLIIMTVV). Residues 310–345 (TDYRIALTELFLGSHSGAQVEVIPVEVVSILNFSLL) lie on the Cytoplasmic side of the membrane.

The protein belongs to the nematode receptor-like protein str family. Detected in ALM and PLM mechanosensory neurons and head neurons.

It localises to the cell membrane. Regulates egg-laying and locomotion. Likely to act upstream of goa-1 to suppress 5-hydroxytryptamine (5-HT) biosynthesis in hermaphrodite-specific neurons (HSNs) through inhibition of tph-1 transcription. The polypeptide is G-protein coupled receptor str-33 (Caenorhabditis elegans).